We begin with the raw amino-acid sequence, 425 residues long: Perilipin-2 (425 aa).

Ala2 bears the N-acetylalanine mark. Ser213 is subject to Phosphoserine. Residue Tyr230 is modified to Phosphotyrosine.

It belongs to the perilipin family. Interacts with IRGC. Post-translationally, acylated; primarily with C14, C16 and C18 fatty acids. In terms of processing, phosphorylation at Tyr-230 by isoform 1 of CHKA (CHKalpha2) promotes dissociation from lipid droplets: dissociation is followed by recruitment of autophagosome machinery to lipid droplets and subsequent lipid droplet lipolysis. Polyubiquitination of Nt-acetylatable A-PLIN2 by MARCHF6 lead to degradation by 26S proteasomes. In terms of tissue distribution, adipose tissue specific. Expressed abundantly and preferentially in fat pads.

The protein resides in the membrane. It localises to the lipid droplet. Functionally, structural component of lipid droplets, which is required for the formation and maintenance of lipid storage droplets. The protein is Perilipin-2 of Mus musculus (Mouse).